A 299-amino-acid polypeptide reads, in one-letter code: CCR4-NOT transcription complex subunit 9 (299 aa).

M1 is modified (N-acetylmethionine).

Belongs to the CNOT9 family. In terms of assembly, homodimer. Component of the CCR4-NOT complex; distinct complexes seem to exist that differ in the participation of probably mutually exclusive catalytic subunits. Interacts with MYB, ATF2, RARA, RARB, RARG, RXRA, RXRB and RXRG. Identified in a complex with ATF2 bound to target DNA. Interacts with NANOS2. Directly interacts with ZNF335.

It localises to the nucleus. The protein resides in the cytoplasm. It is found in the P-body. Functionally, component of the CCR4-NOT complex which is one of the major cellular mRNA deadenylases and is linked to various cellular processes including bulk mRNA degradation, miRNA-mediated repression, translational repression during translational initiation and general transcription regulation. Additional complex functions may be a consequence of its influence on mRNA expression. Involved in down-regulation of MYB- and JUN-dependent transcription. Enhances ligand-dependent transcriptional activity of nuclear hormone receptors. May play a role in cell differentiation. This is CCR4-NOT transcription complex subunit 9 from Bos taurus (Bovine).